The chain runs to 458 residues: MSVSSAPPSATPGFASEVRTTGLLALPLVLGHVSTGLIGFVDNVIAGHHGTATLAAVTIGTSLLWLPMLVPIGTLISLTASVSQLLGAGREREIGPLFRQALWLSLGLSALMFVFLSVVPPLLPTFGIAPDIVPGATAFLHAVRWGVPALTFYFCMRYLSEGMHWTLPTMLLGFGGLLVLAPVGYALTYGKFGFAEHGAEGLGMASAITMWVQASVFALYLWRARRFAHLQLFAHLEGPRWRAIGELLRTGLPIGITVLMEGGLFIVTALLIGRLGSTEAAAHQIAINVAQLCFMIPMGVAEATTVRVGHAVGRGDPQAMRRAAWAGYAIVLGTQALSASALLLGHDAIVGVYTDDVAVAALASVLLLFAATFQFPDGIQVLSAGALRGLKDTRVPMFLAMFSYWGVGMPIGAGLGLGLGWGPKGMWVGLILGLTVASILMGLRFRQTSRRLTATVTP.

12 helical membrane passes run threonine 21–asparagine 43, threonine 58–alanine 80, alanine 101–leucine 123, alanine 138–serine 160, leucine 167–tyrosine 189, alanine 199–leucine 221, glycine 251–glycine 273, asparagine 288–histidine 310, alanine 323–glycine 345, alanine 360–leucine 382, valine 395–leucine 417, and tryptophan 427–phenylalanine 445.

Belongs to the multi antimicrobial extrusion (MATE) (TC 2.A.66.1) family.

The protein resides in the cell inner membrane. Its function is as follows. Multidrug efflux pump. The protein is Probable multidrug resistance protein NorM (norM) of Xanthomonas axonopodis pv. citri (strain 306).